The sequence spans 689 residues: Glycine--tRNA ligase beta subunit (689 aa).

The protein belongs to the class-II aminoacyl-tRNA synthetase family. As to quaternary structure, tetramer of two alpha and two beta subunits.

The protein localises to the cytoplasm. It catalyses the reaction tRNA(Gly) + glycine + ATP = glycyl-tRNA(Gly) + AMP + diphosphate. In Salmonella paratyphi C (strain RKS4594), this protein is Glycine--tRNA ligase beta subunit.